The chain runs to 326 residues: Thioredoxin reductase (326 aa).

Residue 55–62 coordinates FAD; sequence EGPEPGGQ. A disulfide bridge connects residues Cys156 and Cys159. 298–307 provides a ligand contact to FAD; sequence DVSNKLYAQA.

The protein belongs to the class-II pyridine nucleotide-disulfide oxidoreductase family. As to quaternary structure, homodimer. Requires FAD as cofactor.

The protein localises to the cytoplasm. The catalysed reaction is [thioredoxin]-dithiol + NADP(+) = [thioredoxin]-disulfide + NADPH + H(+). This is Thioredoxin reductase (trxB) from Borreliella burgdorferi (strain ATCC 35210 / DSM 4680 / CIP 102532 / B31) (Borrelia burgdorferi).